The following is a 66-amino-acid chain: UPF0434 protein RPC_0266 (66 aa).

Belongs to the UPF0434 family.

In Rhodopseudomonas palustris (strain BisB18), this protein is UPF0434 protein RPC_0266.